The following is a 216-amino-acid chain: Cytidylate kinase (216 aa).

An ATP-binding site is contributed by glycine 11–threonine 19.

It belongs to the cytidylate kinase family. Type 1 subfamily.

The protein localises to the cytoplasm. The enzyme catalyses CMP + ATP = CDP + ADP. The catalysed reaction is dCMP + ATP = dCDP + ADP. This is Cytidylate kinase from Mesorhizobium japonicum (strain LMG 29417 / CECT 9101 / MAFF 303099) (Mesorhizobium loti (strain MAFF 303099)).